A 278-amino-acid polypeptide reads, in one-letter code: MTTRIDTRFGELKQQGRPALVTFVMAGDPDLDTSLQILKVLPAAGADVIEIGMPFTDPMADGPAIQAAGLRALKAGTTLKKTLGLVRDFRATDNATPLVLMGYYNPIYIYGVDAFLADAKAAGVDGLIIVDLPPEEDEELCLPAMKAGLNFIRLATPTTDEKRLPAVLANTSGFVYYVSITGITGSASADASAVGAAVQRIKRHTNLPVCVGFGIRTPDAAQAIAAQANGAVVGSALIDALKASLNAEGRATKATVGAVADLVASLAAGVRGAKQAAE.

Active-site proton acceptor residues include Glu50 and Asp61.

Belongs to the TrpA family. As to quaternary structure, tetramer of two alpha and two beta chains.

The enzyme catalyses (1S,2R)-1-C-(indol-3-yl)glycerol 3-phosphate + L-serine = D-glyceraldehyde 3-phosphate + L-tryptophan + H2O. It functions in the pathway amino-acid biosynthesis; L-tryptophan biosynthesis; L-tryptophan from chorismate: step 5/5. Its function is as follows. The alpha subunit is responsible for the aldol cleavage of indoleglycerol phosphate to indole and glyceraldehyde 3-phosphate. The polypeptide is Tryptophan synthase alpha chain (Rhodopseudomonas palustris (strain ATCC BAA-98 / CGA009)).